The chain runs to 121 residues: Large ribosomal subunit protein bL12 (121 aa).

It belongs to the bacterial ribosomal protein bL12 family. In terms of assembly, homodimer. Part of the ribosomal stalk of the 50S ribosomal subunit. Forms a multimeric L10(L12)X complex, where L10 forms an elongated spine to which 2 to 4 L12 dimers bind in a sequential fashion. Binds GTP-bound translation factors.

Its function is as follows. Forms part of the ribosomal stalk which helps the ribosome interact with GTP-bound translation factors. Is thus essential for accurate translation. The chain is Large ribosomal subunit protein bL12 from Streptococcus suis (strain 98HAH33).